The sequence spans 517 residues: GMP synthase [glutamine-hydrolyzing] (517 aa).

A Glutamine amidotransferase type-1 domain is found at 9–199 (RILILDFGSQ…VLNVCGCEGL (191 aa)). Cysteine 86 (nucleophile) is an active-site residue. Residues histidine 173 and glutamate 175 contribute to the active site. In terms of domain architecture, GMPS ATP-PPase spans 200–392 (WTSASIIEDA…LGLPYNMLYR (193 aa)). 227–233 (SGGVDSS) contributes to the ATP binding site.

In terms of assembly, homodimer.

The enzyme catalyses XMP + L-glutamine + ATP + H2O = GMP + L-glutamate + AMP + diphosphate + 2 H(+). The protein operates within purine metabolism; GMP biosynthesis; GMP from XMP (L-Gln route): step 1/1. Its function is as follows. Catalyzes the synthesis of GMP from XMP. The sequence is that of GMP synthase [glutamine-hydrolyzing] from Aliivibrio salmonicida (strain LFI1238) (Vibrio salmonicida (strain LFI1238)).